Consider the following 895-residue polypeptide: Putative endoplasmic reticulum metallopeptidase 1-A (895 aa).

Residues 1-30 (MLRRRGGPNELRDELNNSKNQPEDDQRTKR) form a disordered region. The Cytoplasmic segment spans residues 1-34 (MLRRRGGPNELRDELNNSKNQPEDDQRTKRGRES). Basic and acidic residues predominate over residues 10–30 (ELRDELNNSKNQPEDDQRTKR). Residues 35–55 (IGFRHWIYFVLTVAIVYAGVV) form a helical membrane-spanning segment. The Lumenal segment spans residues 56–383 (ALHRKMPAVR…VVGLFTVYYS (328 aa)). Residues His174 and Asp186 each coordinate Zn(2+). The active-site Proton acceptor is the Glu220. Zn(2+) is bound by residues Glu221, Glu247, and His323. A helical membrane pass occupies residues 384 to 404 (VNVGKLLNYIACFATYFLVVL). Residues 405 to 423 (RIRNRLYSVGDLAIAFKHH) lie on the Cytoplasmic side of the membrane. A helical membrane pass occupies residues 424 to 444 (VVAFLAMVITMLLIIAFVVQM). Topologically, residues 445 to 452 (DLVMCWYK) are lumenal. The chain crosses the membrane as a helical span at residues 453 to 473 (MPEIVGALYVLPMLIAGAIVH). Topologically, residues 474-492 (SHYADNNRIRNVEMVQYDT) are cytoplasmic. Residues 493–513 (ILLSFASILFLMTFYNLSSAF) form a helical membrane-spanning segment. Residues 514 to 517 (YVLN) lie on the Lumenal side of the membrane. The helical transmembrane segment at 518–538 (NLILPVFKDIIIWALGLFGVI) threads the bilayer. Over 539–544 (RRVTPR) the chain is Cytoplasmic. A helical transmembrane segment spans residues 545–565 (VLFFTQLFCFLPTFVFAAYAI). Residues 566–586 (SQCVDFFVPVMGRLGNAINPE) are Lumenal-facing. Residues 587-607 (FIMGPLGLVIASGFILFVNNL) form a helical membrane-spanning segment. The Cytoplasmic portion of the chain corresponds to 608–613 (FYISRR). Residues 614-634 (MNYIIRLLFAIFALFILVLIT) form a helical membrane-spanning segment. The Lumenal portion of the chain corresponds to 635-895 (TKVGNPYEYS…GRSEIVVKIF (261 aa)). Residues Asn659, Asn702, and Asn758 are each glycosylated (N-linked (GlcNAc...) asparagine).

The protein belongs to the peptidase M28 family. Zn(2+) serves as cofactor.

It is found in the endoplasmic reticulum membrane. This is Putative endoplasmic reticulum metallopeptidase 1-A from Caenorhabditis elegans.